A 343-amino-acid polypeptide reads, in one-letter code: Ornithine carbamoyltransferase, catabolic (343 aa).

Ser62–Thr65 provides a ligand contact to carbamoyl phosphate. His79 contacts Ni(2+). Carbamoyl phosphate contacts are provided by residues Gln89, Arg113, and His140–Gln143. Residues Asn172, Asp236, and Ser240 to Met241 each bind L-ornithine. Carbamoyl phosphate contacts are provided by residues Cys278–Leu279 and Arg323.

It belongs to the aspartate/ornithine carbamoyltransferase superfamily. OTCase family. Homohexamer; dimer of trimers. Requires Ni(2+) as cofactor.

It localises to the cytoplasm. It catalyses the reaction carbamoyl phosphate + L-ornithine = L-citrulline + phosphate + H(+). It functions in the pathway amino-acid degradation; L-arginine degradation via ADI pathway; carbamoyl phosphate from L-arginine: step 2/2. In terms of biological role, involved in the catabolism of arginine. Catalyzes the phosphorolysis of citrulline, the reverse reaction of the biosynthetic one, yielding ornithine and carbamoyl phosphate which serve to generate ATP from ADP. This Lentilactobacillus hilgardii (Lactobacillus hilgardii) protein is Ornithine carbamoyltransferase, catabolic.